The chain runs to 86 residues: Putative membrane protein insertion efficiency factor (86 aa).

It belongs to the UPF0161 family.

Its subcellular location is the cell inner membrane. In terms of biological role, could be involved in insertion of integral membrane proteins into the membrane. The sequence is that of Putative membrane protein insertion efficiency factor from Pasteurella multocida (strain Pm70).